A 1218-amino-acid chain; its full sequence is Coatomer subunit alpha-2 (1218 aa).

WD repeat units lie at residues 7-48, 49-88, 91-132, 133-172, 202-241, 246-285, 288-326, and 363-404; these read TKSN…DRFD, EHDG…CLFT, GHLD…AVLT, GHNH…KKSV, GHDR…AWEV, GHMN…GIQT, REHD…PAFS, and SLNQ…AGRA. A disordered region spans residues 855–876; the sequence is MANGGDGFDAEEGEANEEDGEE. Over residues 862-876 the composition is skewed to acidic residues; it reads FDAEEGEANEEDGEE.

Oligomeric complex that consists of at least the alpha, beta, beta', gamma, delta, epsilon and zeta subunits.

It is found in the cytoplasm. The protein resides in the golgi apparatus membrane. It localises to the cytoplasmic vesicle. Its subcellular location is the COPI-coated vesicle membrane. Functionally, the coatomer is a cytosolic protein complex that binds to dilysine motifs and reversibly associates with Golgi non-clathrin-coated vesicles, which further mediate biosynthetic protein transport from the ER, via the Golgi up to the trans Golgi network. Coatomer complex is required for budding from Golgi membranes, and is essential for the retrograde Golgi-to-ER transport of dilysine-tagged proteins. This Oryza sativa subsp. japonica (Rice) protein is Coatomer subunit alpha-2.